We begin with the raw amino-acid sequence, 546 residues long: 2-isopropylmalate synthase (546 aa).

Positions 8 to 271 constitute a Pyruvate carboxyltransferase domain; sequence ILIFDTTLRD…NKFFNRNSDS (264 aa). Residues Asp17, His208, His210, and Asn244 each contribute to the Mn(2+) site. Positions 408–546 are regulatory domain; that stretch reads QLSLVQVSCG…DKTLLSNPGK (139 aa).

It belongs to the alpha-IPM synthase/homocitrate synthase family. LeuA type 1 subfamily. As to quaternary structure, homodimer. Mn(2+) is required as a cofactor.

It localises to the cytoplasm. It carries out the reaction 3-methyl-2-oxobutanoate + acetyl-CoA + H2O = (2S)-2-isopropylmalate + CoA + H(+). It functions in the pathway amino-acid biosynthesis; L-leucine biosynthesis; L-leucine from 3-methyl-2-oxobutanoate: step 1/4. Catalyzes the condensation of the acetyl group of acetyl-CoA with 3-methyl-2-oxobutanoate (2-ketoisovalerate) to form 3-carboxy-3-hydroxy-4-methylpentanoate (2-isopropylmalate). This is 2-isopropylmalate synthase from Prochlorococcus marinus (strain MIT 9215).